Here is a 40-residue protein sequence, read N- to C-terminus: ALFLDPPPNLWAEAQSLLEPWANVTLTSQSRLPVLNFQGL.

A glycan (N-linked (GlcNAc...) asparagine) is linked at Asn-23.

As to quaternary structure, interacts with CRISP3. In terms of tissue distribution, plasma.

It is found in the secreted. The polypeptide is Alpha-1B-glycoprotein (A1BG) (Sus scrofa (Pig)).